Consider the following 498-residue polypeptide: MISMKYRDLRDFLSLLEQRGELKRISQPIDPYLEMTEIADRTLRAGGPALLFENPKGYSMPVLCNLFGTAKRVAMGMGQEDVSALRDVGKLLAFLKEPDPPKGFRDLFDKLPKFKQVLNMPTKRLNSAPCQEQVWQGEDVDLSRIPVMHCWPEDAAPLVSWGLTITRGPHKERQNLGIYRQQVLGKNKLIMRWLSHRGGALDYQEWCEAHPGERFPVAVALGADPATILAAVTPVPDTLSEYAFAGLLRGHKTEVVKCLSNDLEVPASAEIVLEGYIEQGDMAPEGPYGDHTGYYNEIDNFPVFTVTHITQRQDAIYHSTYTGRPPDEPAVMGVALNEVFVPILQKQFPEIVDFYLPPEGCSYRLAVVTIKKQYAGHAKRVMMGIWSFLRQFMYTKFVIVCDDDINARDWNDVIWAITTRMDPSRDTVLIENTPIDYLDFASPVSGLGSKMGLDATNKWPAETPREWGRPIKMDEDVRARIDALWDELAIFSDKDAKR.

Residue asparagine 175 participates in Mn(2+) binding. Residues 178–180 (IYR), 192–194 (RWL), and 197–198 (RG) each bind prenylated FMN. Residue glutamate 241 coordinates Mn(2+). The active-site Proton donor is the aspartate 290.

The protein belongs to the UbiD family. Homohexamer. It depends on prenylated FMN as a cofactor. Mn(2+) is required as a cofactor.

The protein localises to the cell membrane. The catalysed reaction is a 4-hydroxy-3-(all-trans-polyprenyl)benzoate + H(+) = a 2-(all-trans-polyprenyl)phenol + CO2. It functions in the pathway cofactor biosynthesis; ubiquinone biosynthesis. In terms of biological role, catalyzes the decarboxylation of 3-octaprenyl-4-hydroxy benzoate to 2-octaprenylphenol, an intermediate step in ubiquinone biosynthesis. This chain is 3-octaprenyl-4-hydroxybenzoate carboxy-lyase, found in Yersinia pestis bv. Antiqua (strain Antiqua).